We begin with the raw amino-acid sequence, 381 residues long: L-lactate dehydrogenase (381 aa).

In terms of domain architecture, FMN hydroxy acid dehydrogenase spans 1–380; sequence MIISSANDYR…TRDALVDLSK (380 aa). Tyr24 contacts substrate. Positions 106 and 127 each coordinate FMN. Residue Tyr129 coordinates substrate. Residue Thr155 participates in FMN binding. Residue Arg164 coordinates substrate. Lys251 serves as a coordination point for FMN. The active-site Proton acceptor is the His275. A substrate-binding site is contributed by Arg278. 306–330 contacts FMN; it reads DSGIRNGLDIVRMLALGADATMLGR.

This sequence belongs to the FMN-dependent alpha-hydroxy acid dehydrogenase family. It depends on FMN as a cofactor.

It localises to the cell inner membrane. It catalyses the reaction (S)-lactate + A = pyruvate + AH2. Its function is as follows. Catalyzes the conversion of L-lactate to pyruvate. Is coupled to the respiratory chain. This chain is L-lactate dehydrogenase, found in Actinobacillus pleuropneumoniae serotype 5b (strain L20).